Here is a 277-residue protein sequence, read N- to C-terminus: S-formylglutathione hydrolase FrmB (277 aa).

Active-site charge relay system residues include Ser-145, Asp-221, and His-254.

Belongs to the esterase D family.

It carries out the reaction S-formylglutathione + H2O = formate + glutathione + H(+). Its function is as follows. Serine hydrolase involved in the detoxification of formaldehyde. Hydrolyzes S-formylglutathione to glutathione and formate. In Escherichia coli O1:K1 / APEC, this protein is S-formylglutathione hydrolase FrmB (frmB).